The following is a 185-amino-acid chain: Adenine phosphoribosyltransferase (185 aa).

The protein belongs to the purine/pyrimidine phosphoribosyltransferase family. As to quaternary structure, homodimer.

It localises to the cytoplasm. It carries out the reaction AMP + diphosphate = 5-phospho-alpha-D-ribose 1-diphosphate + adenine. The protein operates within purine metabolism; AMP biosynthesis via salvage pathway; AMP from adenine: step 1/1. Catalyzes a salvage reaction resulting in the formation of AMP, that is energically less costly than de novo synthesis. The polypeptide is Adenine phosphoribosyltransferase (Arthrobacter sp. (strain FB24)).